Consider the following 197-residue polypeptide: uncharacterized protein (197 aa).

Transmembrane regions (helical) follow at residues 11–31 (IALI…ISAS), 85–105 (STFM…SIFV), 109–129 (AVVV…VVLF), and 174–194 (VGTG…YPFI).

The protein localises to the cell membrane. This is an uncharacterized protein from Methanocaldococcus jannaschii (strain ATCC 43067 / DSM 2661 / JAL-1 / JCM 10045 / NBRC 100440) (Methanococcus jannaschii).